Consider the following 311-residue polypeptide: Transcriptional regulatory protein MoaR1 (311 aa).

A DNA-binding region (ompR/PhoB-type) is located at residues 15–117; that stretch reads LNATTAGAVQ…SEPPGYRLLI (103 aa).

It belongs to the AfsR/DnrI/RedD regulatory family.

In terms of biological role, acts as a positive transcriptional regulator of the molybdopterin biosynthesis moa1 locus, promoting the expression of the moaA1B1C1D1 genes. This is Transcriptional regulatory protein MoaR1 (moaR1) from Mycobacterium bovis (strain BCG / Pasteur 1173P2).